We begin with the raw amino-acid sequence, 601 residues long: Glutamine--fructose-6-phosphate aminotransferase [isomerizing] (601 aa).

The active-site Nucleophile; for GATase activity is Cys2. One can recognise a Glutamine amidotransferase type-2 domain in the interval 2 to 218; that stretch reads CGIVGYIGYD…DHEIVIVKRD (217 aa). SIS domains are found at residues 284–423 and 453–591; these read IIND…NHGR and IATD…VDKP. The active-site For Fru-6P isomerization activity is Lys596.

In terms of assembly, homodimer.

The protein resides in the cytoplasm. It catalyses the reaction D-fructose 6-phosphate + L-glutamine = D-glucosamine 6-phosphate + L-glutamate. In terms of biological role, catalyzes the first step in hexosamine metabolism, converting fructose-6P into glucosamine-6P using glutamine as a nitrogen source. The chain is Glutamine--fructose-6-phosphate aminotransferase [isomerizing] from Staphylococcus epidermidis (strain ATCC 35984 / DSM 28319 / BCRC 17069 / CCUG 31568 / BM 3577 / RP62A).